The chain runs to 462 residues: tRNA-2-methylthio-N(6)-dimethylallyladenosine synthase (462 aa).

Residues 18 to 138 (RKVFVKTYGC…LPNALARVRS (121 aa)) form the MTTase N-terminal domain. The [4Fe-4S] cluster site is built by C27, C63, C101, C179, C183, and C186. The 233-residue stretch at 165–397 (RKRGVSAFLT…QALLSEQQYA (233 aa)) folds into the Radical SAM core domain. The TRAM domain occupies 400–462 (DSMIGREMDV…TNSLIAQKLA (63 aa)).

This sequence belongs to the methylthiotransferase family. MiaB subfamily. As to quaternary structure, monomer. [4Fe-4S] cluster serves as cofactor.

The protein localises to the cytoplasm. It catalyses the reaction N(6)-dimethylallyladenosine(37) in tRNA + (sulfur carrier)-SH + AH2 + 2 S-adenosyl-L-methionine = 2-methylsulfanyl-N(6)-dimethylallyladenosine(37) in tRNA + (sulfur carrier)-H + 5'-deoxyadenosine + L-methionine + A + S-adenosyl-L-homocysteine + 2 H(+). Functionally, catalyzes the methylthiolation of N6-(dimethylallyl)adenosine (i(6)A), leading to the formation of 2-methylthio-N6-(dimethylallyl)adenosine (ms(2)i(6)A) at position 37 in tRNAs that read codons beginning with uridine. The polypeptide is tRNA-2-methylthio-N(6)-dimethylallyladenosine synthase (Brucella anthropi (strain ATCC 49188 / DSM 6882 / CCUG 24695 / JCM 21032 / LMG 3331 / NBRC 15819 / NCTC 12168 / Alc 37) (Ochrobactrum anthropi)).